A 484-amino-acid polypeptide reads, in one-letter code: Glycogen synthase (484 aa).

Position 15 (lysine 15) interacts with ADP-alpha-D-glucose.

It belongs to the glycosyltransferase 1 family. Bacterial/plant glycogen synthase subfamily.

The enzyme catalyses [(1-&gt;4)-alpha-D-glucosyl](n) + ADP-alpha-D-glucose = [(1-&gt;4)-alpha-D-glucosyl](n+1) + ADP + H(+). The protein operates within glycan biosynthesis; glycogen biosynthesis. In terms of biological role, synthesizes alpha-1,4-glucan chains using ADP-glucose. The chain is Glycogen synthase from Syntrophotalea carbinolica (strain DSM 2380 / NBRC 103641 / GraBd1) (Pelobacter carbinolicus).